The chain runs to 160 residues: Major pollen allergen Car b 1 isoform 2 (160 aa).

The protein belongs to the BetVI family.

The polypeptide is Major pollen allergen Car b 1 isoform 2 (Carpinus betulus (European hornbeam)).